Consider the following 102-residue polypeptide: Citrate lyase acyl carrier protein (102 aa).

At S14 the chain carries O-(phosphoribosyl dephospho-coenzyme A)serine.

Belongs to the CitD family. In terms of assembly, oligomer with a subunit composition of (alpha,beta,gamma)6.

It is found in the cytoplasm. In terms of biological role, covalent carrier of the coenzyme of citrate lyase. This is Citrate lyase acyl carrier protein from Streptococcus pyogenes serotype M2 (strain MGAS10270).